A 211-amino-acid polypeptide reads, in one-letter code: GTP pyrophosphokinase YjbM (211 aa).

Guanosine 3'-diphosphate 5'-triphosphate contacts are provided by residues 21–28 (KVKLKGIR), 41–42 (EF), and 46–48 (RVK). ATP-binding positions include 46 to 48 (RVK), serine 52, 56 to 59 (KARR), aspartate 72, and arginine 77. Residue arginine 59 coordinates guanosine 3'-diphosphate 5'-triphosphate. Aspartate 72 is a Mg(2+) binding site. Residues arginine 105, 112 to 114 (KES), and histidine 120 contribute to the guanosine 3'-diphosphate 5'-triphosphate site. The Proton acceptor role is filled by glutamate 139. Guanosine 3'-diphosphate 5'-triphosphate is bound by residues asparagine 148 and 151–155 (ATIEH).

This sequence belongs to the RelA/SpoT family. As to quaternary structure, homotetramer.

The catalysed reaction is GTP + ATP = guanosine 3'-diphosphate 5'-triphosphate + AMP. It catalyses the reaction GDP + ATP = guanosine 3',5'-bis(diphosphate) + AMP. The protein operates within purine metabolism; ppGpp biosynthesis; ppGpp from GTP: step 1/2. With respect to regulation, allosterically regulated by its own products; pppGpp simulates synthesis 10-fold more than ppGpp. 2 pppGpp molecules bind in a regulatory cleft in the middle of the tetramer in an asymmetric manner. There is a specific contact of Lys-25 to the gamma-phosphate of pppGpp, explaining why pppGpp stimulates activity but ppGpp does not. Its function is as follows. Functions as a (p)ppGpp synthase; GDP can be used instead of GTP, resulting in an increase of (p)ppGpp synthesis. The enzyme binds ATP, then GDP or GTP and catalysis is highly cooperative. In eubacteria ppGpp (guanosine 3'-diphosphate 5'-diphosphate) is a mediator of the stringent response that coordinates a variety of cellular activities in response to changes in nutritional abundance. Probably has a minor role in the stringent response. In Bacillus subtilis (strain 168), this protein is GTP pyrophosphokinase YjbM (yjbM).